A 447-amino-acid polypeptide reads, in one-letter code: Retinoic acid receptor alpha (447 aa).

Residues 1 to 79 form a modulating region; sequence MAGKGNPVPG…PPPPPRVYKP (79 aa). Over residues 47-61 the composition is skewed to polar residues; the sequence is TPSPATIETQSTSSE. Residues 47–72 are disordered; sequence TPSPATIETQSTSSEEIVPSPPSPPP. 2 NR C4-type zinc fingers span residues 80-100 and 116-140; these read CFVC…CEGC and CHRE…LQKC. Positions 80–145 form a DNA-binding region, nuclear receptor; sequence CFVCQDKSSG…RLQKCLEVGM (66 aa). Positions 146–174 are hinge; sequence SKESVRNDRNKKKKDEKKPECIENYVLSP. The region spanning 175–409 is the NR LBD domain; that stretch reads DTEQMINRVR…PLIQEMLENS (235 aa). The 9aaTAD motif lies at 400–408; that stretch reads PLIQEMLEN. Residues 407–447 form a disordered region; it reads ENSEGLESGATGSRPSGAPPGSCSPSLSPSSAQSSPPTQSP. The segment covering 414-447 has biased composition (low complexity); the sequence is SGATGSRPSGAPPGSCSPSLSPSSAQSSPPTQSP.

This sequence belongs to the nuclear hormone receptor family. NR1 subfamily. As to quaternary structure, heterodimer; with an rxr molecule. Binds DNA preferentially as a rar/rxr heterodimer.

Its subcellular location is the nucleus. Receptor for retinoic acid. Retinoic acid receptors bind as heterodimers to their target response elements in response to their ligands, all-trans or 9-cis retinoic acid, and regulate gene expression in various biological processes. The rar/rxr heterodimers bind to the retinoic acid response elements (RARE) composed of tandem 5'-AGGTCA-3' sites known as DR1-DR5. The sequence is that of Retinoic acid receptor alpha (rara) from Takifugu rubripes (Japanese pufferfish).